We begin with the raw amino-acid sequence, 263 residues long: Ribosome maturation factor RimP (263 aa).

Positions 192-263 (EREMKRDLGI…RGEIDPIEGE (72 aa)) are disordered. Positions 217-231 (PARRNAPKPKLKSTA) are enriched in basic residues. The span at 232–257 (KAHEKKPPKNTKEHRLAAERLRRGEI) shows a compositional bias: basic and acidic residues.

It belongs to the RimP family.

It is found in the cytoplasm. Its function is as follows. Required for maturation of 30S ribosomal subunits. In Nitrobacter hamburgensis (strain DSM 10229 / NCIMB 13809 / X14), this protein is Ribosome maturation factor RimP.